Reading from the N-terminus, the 80-residue chain is Myrmicitoxin(1)-Pr1a (80 aa).

A signal peptide spans 1-23 (MEIPKLLYIAVIAIGLSGSLTWA). The propeptide occupies 24 to 57 (TPLANPLAEAEAEAKATAEATAEALAEALAEPEP). Residue Phe-79 is modified to Phenylalanine amide.

The protein belongs to the formicidae venom clade 1 family. As to expression, expressed by the venom gland.

It is found in the secreted. Vertebrate-selective toxin that causes pain by targeting voltage-gated sodium channels. The sequence is that of Myrmicitoxin(1)-Pr1a from Pogonomyrmex rugosus (Desert harvester ant).